Reading from the N-terminus, the 158-residue chain is NAD(P)H-quinone oxidoreductase subunit J, chloroplastic (158 aa).

This sequence belongs to the complex I 30 kDa subunit family. As to quaternary structure, NDH is composed of at least 16 different subunits, 5 of which are encoded in the nucleus.

It is found in the plastid. The protein localises to the chloroplast thylakoid membrane. The enzyme catalyses a plastoquinone + NADH + (n+1) H(+)(in) = a plastoquinol + NAD(+) + n H(+)(out). It catalyses the reaction a plastoquinone + NADPH + (n+1) H(+)(in) = a plastoquinol + NADP(+) + n H(+)(out). Its function is as follows. NDH shuttles electrons from NAD(P)H:plastoquinone, via FMN and iron-sulfur (Fe-S) centers, to quinones in the photosynthetic chain and possibly in a chloroplast respiratory chain. The immediate electron acceptor for the enzyme in this species is believed to be plastoquinone. Couples the redox reaction to proton translocation, and thus conserves the redox energy in a proton gradient. This chain is NAD(P)H-quinone oxidoreductase subunit J, chloroplastic, found in Psilotum nudum (Whisk fern).